A 397-amino-acid polypeptide reads, in one-letter code: Lysophospholipid transporter LplT (397 aa).

Residues 1–17 are Periplasmic-facing; sequence MSESVHTNTSLWSKGMK. The chain crosses the membrane as a helical span at residues 18–38; the sequence is AVIVAQFLSAFGDNALLFATL. At 39–52 the chain is on the cytoplasmic side; sequence ALLKAQFYPEWSQP. Residues 53–73 form a helical membrane-spanning segment; the sequence is ILQMVFVGAYILFAPFVGQVA. The Periplasmic portion of the chain corresponds to 74–90; that stretch reads DSFAKGRVMMFANGLKL. A helical transmembrane segment spans residues 91–111; the sequence is LGAASICFGINPFLGYTLVGV. Residues 112–144 are Cytoplasmic-facing; that stretch reads GAAAYSPAKYGILGELTTGSKLVKANGLMEAST. Residues 145–165 traverse the membrane as a helical segment; that stretch reads IAAILLGSVAGGVLADWHVLV. Alanine 166 is a topological domain (periplasmic). Residues 167 to 187 traverse the membrane as a helical segment; the sequence is LAACALAYGGAVVANIYIPKL. Residues 188–226 lie on the Cytoplasmic side of the membrane; sequence AAARPGQSWNLINMTRSFLNACTSLWRNGETRFSLVGTS. The chain crosses the membrane as a helical span at residues 227 to 247; that stretch reads LFWGAGVTLRFLLVLWVPVAL. The Periplasmic portion of the chain corresponds to 248–256; that stretch reads GITDNATPT. Residues 257-277 form a helical membrane-spanning segment; sequence YLNAMVAIGIVVGAGAAAKLV. Residues 278–280 lie on the Cytoplasmic side of the membrane; it reads TLE. A helical membrane pass occupies residues 281–301; that stretch reads TVSRCMPAGILIGVVVLIFSL. Topologically, residues 302–304 are periplasmic; that stretch reads QHE. The helical transmembrane segment at 305–325 threads the bilayer; the sequence is QLPAYALLMLIGVLGGFFVVP. Residues 326–343 lie on the Cytoplasmic side of the membrane; it reads LNALLQERGKKSVGAGNA. The chain crosses the membrane as a helical span at residues 344–364; it reads IAVQNLGENSAMLLMLGIYSL. The Periplasmic segment spans residues 365–366; sequence AV. Residues 367 to 387 form a helical membrane-spanning segment; that stretch reads MVGIPVVPIGIGFGALFALAI. Topologically, residues 388–397 are cytoplasmic; it reads TALWIWQRRH.

Belongs to the major facilitator superfamily. LplT (TC 2.A.1.42) family.

It is found in the cell inner membrane. Functionally, catalyzes the facilitated diffusion of 2-acyl-glycero-3-phosphoethanolamine (2-acyl-GPE) into the cell. The polypeptide is Lysophospholipid transporter LplT (Escherichia coli O157:H7 (strain EC4115 / EHEC)).